A 423-amino-acid polypeptide reads, in one-letter code: 3-phosphoshikimate 1-carboxyvinyltransferase (423 aa).

Lys-20, Ser-21, and Arg-25 together coordinate 3-phosphoshikimate. A phosphoenolpyruvate-binding site is contributed by Lys-20. Phosphoenolpyruvate contacts are provided by Gly-91 and Arg-119. The 3-phosphoshikimate site is built by Thr-163, Ser-164, Gln-165, Asp-305, Gln-328, and Lys-332. Gln-165 is a phosphoenolpyruvate binding site. Catalysis depends on Asp-305, which acts as the Proton acceptor. Positions 336 and 377 each coordinate phosphoenolpyruvate.

Belongs to the EPSP synthase family. As to quaternary structure, monomer.

The protein resides in the cytoplasm. The catalysed reaction is 3-phosphoshikimate + phosphoenolpyruvate = 5-O-(1-carboxyvinyl)-3-phosphoshikimate + phosphate. It functions in the pathway metabolic intermediate biosynthesis; chorismate biosynthesis; chorismate from D-erythrose 4-phosphate and phosphoenolpyruvate: step 6/7. In terms of biological role, catalyzes the transfer of the enolpyruvyl moiety of phosphoenolpyruvate (PEP) to the 5-hydroxyl of shikimate-3-phosphate (S3P) to produce enolpyruvyl shikimate-3-phosphate and inorganic phosphate. The sequence is that of 3-phosphoshikimate 1-carboxyvinyltransferase from Acetivibrio thermocellus (strain ATCC 27405 / DSM 1237 / JCM 9322 / NBRC 103400 / NCIMB 10682 / NRRL B-4536 / VPI 7372) (Clostridium thermocellum).